The primary structure comprises 154 residues: Protein X (154 aa).

The segment at 68 to 117 (PCALRFTSARCMETTVNAPRNLPKVLHKRTLGLSAMSTTKIETYFKDCVF) is mitochondrial targeting sequence.

It belongs to the orthohepadnavirus protein X family. In terms of assembly, may form homodimer. May interact with host CEBPA, CFLAR, CREB1, DDB1, E4F1, HBXIP, HSPD1/HSP60, NFKBIA, POLR2E and SMAD4. Interacts with host SMC5-SMC6 complex and induces its degradation. Interacts with host TRPC4AP; leading to prevent ubiquitination of TRPC4AP. Interacts with host PLSCR1; this interaction promotes ubiquitination and degradation of HBx and impairs HBx-mediated cell proliferation. In terms of processing, a fraction may be phosphorylated in insect cells and HepG2 cells, a human hepatoblastoma cell line. Phosphorylated in vitro by host protein kinase C or mitogen-activated protein kinase. N-acetylated in insect cells.

The protein localises to the host cytoplasm. Its subcellular location is the host nucleus. The protein resides in the host mitochondrion. In terms of biological role, multifunctional protein that plays a role in silencing host antiviral defenses and promoting viral transcription. Does not seem to be essential for HBV infection. May be directly involved in development of cirrhosis and liver cancer (hepatocellular carcinoma). Most of cytosolic activities involve modulation of cytosolic calcium. The effect on apoptosis is controversial depending on the cell types in which the studies have been conducted. May induce apoptosis by localizing in mitochondria and causing loss of mitochondrial membrane potential. May also modulate apoptosis by binding host CFLAR, a key regulator of the death-inducing signaling complex (DISC). Promotes viral transcription by using the host E3 ubiquitin ligase DDB1 to target the SMC5-SMC6 complex to proteasomal degradation. This host complex would otherwise bind to viral episomal DNA, and prevents its transcription. Moderately stimulates transcription of many different viral and cellular transcription elements. Promoters and enhancers stimulated by HBx contain DNA binding sites for NF-kappa-B, AP-1, AP-2, c-EBP, ATF/CREB, or the calcium-activated factor NF-AT. The chain is Protein X from Chimpanzee hepatitis B virus (isolate United Kingdom/LSH/1988) (HBVcpz).